A 331-amino-acid chain; its full sequence is Putative lipoprotein YerB (331 aa).

A signal peptide spans 1–19 (MKKWMTVCALCFVFFLLVS). Cysteine 20 carries N-palmitoyl cysteine lipidation. Cysteine 20 carries the S-diacylglycerol cysteine lipid modification. Threonine 97 is modified (phosphothreonine). Serine 103 carries the post-translational modification Phosphoserine.

In terms of assembly, interacts with PcrA. The interaction is not essential for cell viability or repair of UV-induced lesions.

It localises to the cell membrane. The protein is Putative lipoprotein YerB (yerB) of Bacillus subtilis (strain 168).